Here is a 172-residue protein sequence, read N- to C-terminus: Co-chaperone protein HscB homolog (172 aa).

The J domain maps to 2–74 (NYFELFGLVE…LRRAEYLLSL (73 aa)).

This sequence belongs to the HscB family. In terms of assembly, interacts with HscA and stimulates its ATPase activity.

Its function is as follows. Co-chaperone involved in the maturation of iron-sulfur cluster-containing proteins. Seems to help targeting proteins to be folded toward HscA. The polypeptide is Co-chaperone protein HscB homolog (Aeromonas hydrophila subsp. hydrophila (strain ATCC 7966 / DSM 30187 / BCRC 13018 / CCUG 14551 / JCM 1027 / KCTC 2358 / NCIMB 9240 / NCTC 8049)).